Consider the following 251-residue polypeptide: NADPH-dependent oxidoreductase (251 aa).

Belongs to the flavin oxidoreductase frp family. It depends on FMN as a cofactor.

Its function is as follows. Reduces FMN, organic nitro compounds and disulfide DTNB. Involved in maintenance of the cellular redox state and the disulfide stress response. The sequence is that of NADPH-dependent oxidoreductase (nfrA) from Staphylococcus haemolyticus (strain JCSC1435).